The sequence spans 158 residues: Small ribosomal subunit protein eS10 (158 aa).

The tract at residues 99-158 (ETVRRGAVGRPDAPARSAEDRSAYRRAPTTPAAHDKKADVGPGSADLEFRGGFGRGRPAP) is disordered. The segment covering 149 to 158 (GGFGRGRPAP) has biased composition (gly residues).

It belongs to the eukaryotic ribosomal protein eS10 family.

It is found in the cytoplasm. The protein is Small ribosomal subunit protein eS10 (RpS10) of Spodoptera frugiperda (Fall armyworm).